The sequence spans 91 residues: UPF0223 protein SAB0963 (91 aa).

The protein belongs to the UPF0223 family.

The chain is UPF0223 protein SAB0963 from Staphylococcus aureus (strain bovine RF122 / ET3-1).